The chain runs to 313 residues: Ribosomal RNA small subunit methyltransferase H (313 aa).

Residues 35–37 (GGH), aspartate 55, phenylalanine 79, aspartate 100, and glutamine 107 each bind S-adenosyl-L-methionine.

Belongs to the methyltransferase superfamily. RsmH family.

It localises to the cytoplasm. It carries out the reaction cytidine(1402) in 16S rRNA + S-adenosyl-L-methionine = N(4)-methylcytidine(1402) in 16S rRNA + S-adenosyl-L-homocysteine + H(+). Specifically methylates the N4 position of cytidine in position 1402 (C1402) of 16S rRNA. This is Ribosomal RNA small subunit methyltransferase H from Burkholderia pseudomallei (strain 1106a).